The chain runs to 44 residues: Mu-conotoxin-like Cal 12.1.1e (44 aa).

Cystine bridges form between C3/C16, C11/C28, C18/C33, and C27/C38. W17 is modified (6'-bromotryptophan). Residue P23 is modified to 4-hydroxyproline. A 6'-bromotryptophan mark is found at W36 and W37. Residue P39 is modified to 4-hydroxyproline. W43 is subject to 6'-bromotryptophan.

Expressed by the venom duct.

It is found in the secreted. Its function is as follows. Mu-conotoxins block voltage-gated sodium channels. This toxin reversibly blocks voltage-gated sodium channel in cephalopods, with no alteration in the voltage dependence of sodium conductance or on the kinetics of inactivation. This is Mu-conotoxin-like Cal 12.1.1e from Californiconus californicus (California cone).